The following is a 1111-amino-acid chain: Isoleucine--tRNA ligase (1111 aa).

The 'HIGH' region signature appears at 52–62 (PFANGLPHYGH). A 'KMSKS' region motif is present at residues 645-649 (KLSKR). Lys-648 is a binding site for ATP.

It belongs to the class-I aminoacyl-tRNA synthetase family. IleS type 2 subfamily. Monomer. Requires Zn(2+) as cofactor.

The protein resides in the cytoplasm. The catalysed reaction is tRNA(Ile) + L-isoleucine + ATP = L-isoleucyl-tRNA(Ile) + AMP + diphosphate. In terms of biological role, catalyzes the attachment of isoleucine to tRNA(Ile). As IleRS can inadvertently accommodate and process structurally similar amino acids such as valine, to avoid such errors it has two additional distinct tRNA(Ile)-dependent editing activities. One activity is designated as 'pretransfer' editing and involves the hydrolysis of activated Val-AMP. The other activity is designated 'posttransfer' editing and involves deacylation of mischarged Val-tRNA(Ile). This chain is Isoleucine--tRNA ligase, found in Wolbachia pipientis wMel.